The sequence spans 99 residues: Putative type 4B encapsulin shell protein PF1875 (99 aa).

The protein belongs to the encapsulin family. Family 4B subfamily. May self-assemble into facets and potentially into larger complexes.

It localises to the encapsulin nanocompartment. Functionally, may be the encapsulin shell protein in a type 4 A-domain encapsulin nanocompartment system. Its cargo may be upstream glyceraldehyde-3-phosphate dehydrogenase (AC P61879). This is Putative type 4B encapsulin shell protein PF1875 from Pyrococcus furiosus (strain ATCC 43587 / DSM 3638 / JCM 8422 / Vc1).